Consider the following 565-residue polypeptide: Heme/hemopexin transporter protein HuxB (565 aa).

An N-terminal signal peptide occupies residues 1–26 (MKMRPRYSVIASAVSLGFVLSKSVMA). The region spanning 73–150 (FPLKQVQILD…GTVKILLLKG (78 aa)) is the POTRA domain.

The protein belongs to the TPS (TC 1.B.20) family.

It localises to the cell outer membrane. Likely functions in the release of soluble HxuA from the cell. Its function is as follows. Probable member of a two partner secretion pathway (TPS) in which it mediates the secretion of HuxA. This Haemophilus influenzae (strain ATCC 51907 / DSM 11121 / KW20 / Rd) protein is Heme/hemopexin transporter protein HuxB (hxuB).